Reading from the N-terminus, the 241-residue chain is Carboxy-S-adenosyl-L-methionine synthase (241 aa).

S-adenosyl-L-methionine-binding positions include Tyr38, 63–65 (GCS), 88–89 (DN), 116–117 (DI), Asn131, and Arg198.

The protein belongs to the class I-like SAM-binding methyltransferase superfamily. Cx-SAM synthase family. In terms of assembly, homodimer.

It carries out the reaction prephenate + S-adenosyl-L-methionine = carboxy-S-adenosyl-L-methionine + 3-phenylpyruvate + H2O. Functionally, catalyzes the conversion of S-adenosyl-L-methionine (SAM) to carboxy-S-adenosyl-L-methionine (Cx-SAM). In Actinobacillus pleuropneumoniae serotype 3 (strain JL03), this protein is Carboxy-S-adenosyl-L-methionine synthase.